The primary structure comprises 426 residues: Tol-Pal system protein TolB (426 aa).

The signal sequence occupies residues 1-25 (MSITPSLSRRTVMSLLAAGLSPAFA).

The protein belongs to the TolB family. As to quaternary structure, the Tol-Pal system is composed of five core proteins: the inner membrane proteins TolA, TolQ and TolR, the periplasmic protein TolB and the outer membrane protein Pal. They form a network linking the inner and outer membranes and the peptidoglycan layer.

The protein localises to the periplasm. Functionally, part of the Tol-Pal system, which plays a role in outer membrane invagination during cell division and is important for maintaining outer membrane integrity. This Polaromonas sp. (strain JS666 / ATCC BAA-500) protein is Tol-Pal system protein TolB.